Here is a 282-residue protein sequence, read N- to C-terminus: uncharacterized protein (282 aa).

Positions 5-140 constitute an N-acetyltransferase domain; it reads DELIKLHEEH…SFQPYTKKLD (136 aa).

Belongs to the acetyltransferase family.

This is an uncharacterized protein from Bacillus subtilis (strain 168).